The sequence spans 212 residues: Urease accessory protein UreG 2 (212 aa).

GTP is bound at residue 11 to 18; it reads GPVGSGKM.

The protein belongs to the SIMIBI class G3E GTPase family. UreG subfamily. In terms of assembly, homodimer. UreD, UreF and UreG form a complex that acts as a GTP-hydrolysis-dependent molecular chaperone, activating the urease apoprotein by helping to assemble the nickel containing metallocenter of UreC. The UreE protein probably delivers the nickel.

It localises to the cytoplasm. Facilitates the functional incorporation of the urease nickel metallocenter. This process requires GTP hydrolysis, probably effectuated by UreG. Functionally, disrupting the ure2 operon has no effect on urease activity, or pathogen survival in BALB/c mice when inoculated by gavage, but confers slightly enhanced resistance to low pH killing in vitro. In Brucella suis biovar 1 (strain 1330), this protein is Urease accessory protein UreG 2.